Here is an 829-residue protein sequence, read N- to C-terminus: RNA-directed RNA polymerase (829 aa).

The interval 1–39 (MKEPVDCRLSTPAGFSGTVPPPGRTKAARPGTIPVRRSR) is disordered.

In terms of assembly, forms a ribonucleoprotein complex with the 20S RNA, where a single polymerase molecule binds to a single viral RNA genome. Since the viral RNA is not encapsidated, ribonucleoprotein complex formation appears to be the strategy to survive in the host as persistent virus.

The protein localises to the host cytoplasm. It catalyses the reaction RNA(n) + a ribonucleoside 5'-triphosphate = RNA(n+1) + diphosphate. Functionally, RNA-directed RNA polymerase that replicates the viral (+) and (-) genome. The sequence is that of RNA-directed RNA polymerase from Saccharomyces cerevisiae (Baker's yeast).